We begin with the raw amino-acid sequence, 516 residues long: L-amino-acid oxidase (516 aa).

The signal sequence occupies residues 1–18; it reads MNVFFMFSLLFLAALGSC. A disulfide bridge connects residues Cys28 and Cys189. FAD contacts are provided by residues 61–62, 81–82, Arg89, and 103–106; these read MA, EA, and GPMR. Substrate contacts are provided by Arg106 and His239. Residue Val279 participates in FAD binding. Cys349 and Cys430 are disulfide-bonded. A glycan (N-linked (GlcNAc...) asparagine) is linked at Asn379. Position 390 (Tyr390) interacts with substrate. FAD-binding positions include Glu475 and 482–487; that span reads GWIDST. A substrate-binding site is contributed by 482 to 483; that stretch reads GW.

It belongs to the flavin monoamine oxidase family. FIG1 subfamily. As to quaternary structure, homodimer; non-covalently linked. The cofactor is FAD. As to expression, expressed by the venom gland.

Its subcellular location is the secreted. The enzyme catalyses an L-alpha-amino acid + O2 + H2O = a 2-oxocarboxylate + H2O2 + NH4(+). Its function is as follows. Catalyzes an oxidative deamination of predominantly hydrophobic and aromatic L-amino acids, thus producing hydrogen peroxide that may contribute to the diverse toxic effects of this enzyme. Exhibits diverse biological activities, such as hemolysis, edema, hemorrhage, apoptosis, antibacterial and antiparasitic activities, as well as regulation of platelet aggregation. Effects of snake L-amino oxidases on platelets are controversial, since they either induce aggregation or inhibit agonist-induced aggregation. These different effects are probably due to different experimental conditions. The protein is L-amino-acid oxidase of Crotalus adamanteus (Eastern diamondback rattlesnake).